A 293-amino-acid polypeptide reads, in one-letter code: Homoserine kinase (293 aa).

84–94 (PFSRGLGSSSS) provides a ligand contact to ATP.

Belongs to the GHMP kinase family. Homoserine kinase subfamily.

The protein resides in the cytoplasm. It catalyses the reaction L-homoserine + ATP = O-phospho-L-homoserine + ADP + H(+). It functions in the pathway amino-acid biosynthesis; L-threonine biosynthesis; L-threonine from L-aspartate: step 4/5. In terms of biological role, catalyzes the ATP-dependent phosphorylation of L-homoserine to L-homoserine phosphate. The sequence is that of Homoserine kinase from Campylobacter fetus subsp. fetus (strain 82-40).